Consider the following 348-residue polypeptide: Dihydroorotase (348 aa).

Zn(2+) is bound by residues H17 and H19. Residues H19–R21 and N45 contribute to the substrate site. The Zn(2+) site is built by K103, H140, and H178. K103 carries the post-translational modification N6-carboxylysine. Residue H140 coordinates substrate. Position 223 (L223) interacts with substrate. Residue D251 coordinates Zn(2+). D251 is a catalytic residue. H255 and A267 together coordinate substrate.

Belongs to the metallo-dependent hydrolases superfamily. DHOase family. Class II DHOase subfamily. As to quaternary structure, homodimer. The cofactor is Zn(2+).

The enzyme catalyses (S)-dihydroorotate + H2O = N-carbamoyl-L-aspartate + H(+). It functions in the pathway pyrimidine metabolism; UMP biosynthesis via de novo pathway; (S)-dihydroorotate from bicarbonate: step 3/3. Functionally, catalyzes the reversible cyclization of carbamoyl aspartate to dihydroorotate. This Enterobacter sp. (strain 638) protein is Dihydroorotase.